The primary structure comprises 250 residues: Ribosomal RNA-processing protein 15 (250 aa).

Positions 1 to 27 (MGSKHRVDTKDKKRTRKNAEFGREKRN) are enriched in basic and acidic residues. The tract at residues 1–101 (MGSKHRVDTK…NSKHDDGSTG (101 aa)) is disordered. Composition is skewed to acidic residues over residues 43–53 (MEGDEAEEDEQ) and 67–83 (EQSD…EDDD). Phosphoserine is present on serine 69.

Belongs to the RRP15 family.

It is found in the nucleus. The protein localises to the nucleolus. Constituent of pre-60S ribosomal particles. Required for large subunit rRNA maturation, in particular processing of the 27S pre-rRNA at the A3 and B1 sites to yield 5.8S and 25S rRNA. The polypeptide is Ribosomal RNA-processing protein 15 (Saccharomyces cerevisiae (strain ATCC 204508 / S288c) (Baker's yeast)).